The following is a 70-amino-acid chain: Large ribosomal subunit protein bL31 (70 aa).

Zn(2+) contacts are provided by Cys-17, Cys-19, Cys-37, and Cys-40.

Belongs to the bacterial ribosomal protein bL31 family. Type A subfamily. As to quaternary structure, part of the 50S ribosomal subunit. It depends on Zn(2+) as a cofactor.

Binds the 23S rRNA. The chain is Large ribosomal subunit protein bL31 from Clostridium kluyveri (strain NBRC 12016).